The following is a 108-amino-acid chain: Nucleoid-associated protein BP1550 (108 aa).

A disordered region spans residues 87-108; that stretch reads SQEKMASVTAGMPLPPGMKLPF. Residues 99-108 are compositionally biased toward pro residues; the sequence is PLPPGMKLPF.

This sequence belongs to the YbaB/EbfC family. Homodimer.

It is found in the cytoplasm. The protein resides in the nucleoid. Functionally, binds to DNA and alters its conformation. May be involved in regulation of gene expression, nucleoid organization and DNA protection. The protein is Nucleoid-associated protein BP1550 of Bordetella pertussis (strain Tohama I / ATCC BAA-589 / NCTC 13251).